A 379-amino-acid polypeptide reads, in one-letter code: 3-dehydroquinate synthase (379 aa).

NAD(+)-binding positions include 113–117, 137–138, Lys-150, and Lys-159; these read GVIGD and TS. Zn(2+)-binding residues include Glu-192, His-256, and His-274.

It belongs to the sugar phosphate cyclases superfamily. Dehydroquinate synthase family. Co(2+) serves as cofactor. Zn(2+) is required as a cofactor. The cofactor is NAD(+).

It is found in the cytoplasm. It carries out the reaction 7-phospho-2-dehydro-3-deoxy-D-arabino-heptonate = 3-dehydroquinate + phosphate. The protein operates within metabolic intermediate biosynthesis; chorismate biosynthesis; chorismate from D-erythrose 4-phosphate and phosphoenolpyruvate: step 2/7. Its function is as follows. Catalyzes the conversion of 3-deoxy-D-arabino-heptulosonate 7-phosphate (DAHP) to dehydroquinate (DHQ). This chain is 3-dehydroquinate synthase, found in Zymomonas mobilis subsp. mobilis (strain ATCC 31821 / ZM4 / CP4).